Reading from the N-terminus, the 428-residue chain is MSAVVKSIKAREILDSRGNPTVEADVVLSDGSFGRAAVPSGASTGSHEAVELRDGDKSRYNGLGVHKAVANVNTTIASAISGFKASDQQRLDNLLIELDGTPNKAKLGANAMLATSLAVAHAAAASRHMPLYRYLNNSEEYILPVPMFNILNGGKHASNSTDFQEFMVMPVGAKSFAQALQMGTEVYHSLKKVLKGMNQNTTVGDEGGFAPSLPTNKDAVEVILKAIEKAGYRPGEDIFIALDPASSELYQDGKYTLATENKTLSSAEMVDYWCGWVEKYPIISIEDGLFEDDWDGWKLLTRKIGNKVQLVGDDFYVTNIKRLDRGIKEKASNSILIKLNQIGTLSETIAAIKMANNAGWTAVVSHRSGETEDTTIADLAVAMNAGQIKTGAPCRSERTAKYNRLLRIEEELGGKAKYPGKDAFLNLK.

(2R)-2-phosphoglycerate is bound at residue Q164. Catalysis depends on E206, which acts as the Proton donor. Residues D243, E286, and D313 each contribute to the Mg(2+) site. Residues K338, R367, S368, and K389 each coordinate (2R)-2-phosphoglycerate. The Proton acceptor role is filled by K338.

Belongs to the enolase family. It depends on Mg(2+) as a cofactor.

It localises to the cytoplasm. Its subcellular location is the secreted. The protein resides in the cell surface. The catalysed reaction is (2R)-2-phosphoglycerate = phosphoenolpyruvate + H2O. It functions in the pathway carbohydrate degradation; glycolysis; pyruvate from D-glyceraldehyde 3-phosphate: step 4/5. Catalyzes the reversible conversion of 2-phosphoglycerate (2-PG) into phosphoenolpyruvate (PEP). It is essential for the degradation of carbohydrates via glycolysis. In Dehalococcoides mccartyi (strain ATCC BAA-2100 / JCM 16839 / KCTC 5957 / BAV1), this protein is Enolase.